The sequence spans 469 residues: Lactonohydrolase oryH (469 aa).

Residues 1–20 form the signal peptide; that stretch reads MYLSLRLVSLALCIAPLASA.

Belongs to the SMP-30/CGR1 family.

It participates in secondary metabolite biosynthesis. Its function is as follows. Lactonohydrolase; part of the gene cluster that mediates the biosynthesis of oryzines, natural products with an unusual maleidride backbone. The two subunits of the fungal fatty acid synthase oryfasA and oryfasB probably form octenoic acid. This fatty acid is most likely activated by the acyl-CoA ligase oryP to give octenyl-CoA before the citrate synthase-like protein oryE catalyzes condensation with oxaloacetate to form tricarboxylic acid. The next steps of the pathways are conjectural, but a favorite possible route has been proposed, beginning with decarboxylation and concomitant dehydration by the decarboxylase oryM, followed by tautomerization, which may lead to the production of a diene intermediate. Reduction of this diene intermediate could give the known metabolite piliformic acid. On the pathway to oryzine B and oryzine A, however, hydroxylation of the diene by the alpha-ketoglutarate-dependent dioxygenase oryG and lactonisation by the lactonohydrolases oryH or oryL could give oryzine B directly. Finally, enoyl reduction by the dehydrogenase oryD would then convert oryzine B into oryzine A. This is Lactonohydrolase oryH from Aspergillus oryzae (strain ATCC 42149 / RIB 40) (Yellow koji mold).